The chain runs to 448 residues: Asparagine--tRNA ligase (448 aa).

Belongs to the class-II aminoacyl-tRNA synthetase family. Homodimer.

It localises to the cytoplasm. The enzyme catalyses tRNA(Asn) + L-asparagine + ATP = L-asparaginyl-tRNA(Asn) + AMP + diphosphate + H(+). This Streptococcus mutans serotype c (strain ATCC 700610 / UA159) protein is Asparagine--tRNA ligase.